Here is a 1783-residue protein sequence, read N- to C-terminus: 6-methylsalicylic acid synthase (1783 aa).

The span at 1 to 31 (MITSTSSTEVLTPANGSDDSKGTTTPATSSG) shows a compositional bias: polar residues. Residues 1–40 (MITSTSSTEVLTPANGSDDSKGTTTPATSSGDPEMHDDLL) are disordered. Residues 45 to 474 (HDDVAIIGMA…GTVSHAIIEA (430 aa)) form the Ketosynthase family 3 (KS3) domain. Catalysis depends on for beta-ketoacyl synthase activity residues cysteine 217, histidine 352, and histidine 394. Residues 587 to 884 (WVFSGHGAQW…TPTMVRKQPA (298 aa)) form a malonyl-CoA:ACP transacylase (MAT) domain region. Serine 673 (for acyl/malonyl transferase activity) is an active-site residue. Residues 942–1215 (THKPAANDLL…AFAGVEGESL (274 aa)) are product template (PT) domain. The N-terminal hotdog fold stretch occupies residues 948–1064 (NDLLGTRTAL…ATVGADATPS (117 aa)). Residues 948 to 1216 (NDLLGTRTAL…FAGVEGESLS (269 aa)) form the PKS/mFAS DH domain. Histidine 980 functions as the Proton acceptor; for dehydratase activity in the catalytic mechanism. The segment at 1078-1216 (PQKLSDSFSI…FAGVEGESLS (139 aa)) is C-terminal hotdog fold. Residue aspartate 1130 is the Proton donor; for dehydratase activity of the active site. In terms of domain architecture, Carrier spans 1707 to 1781 (EYVLVVVKKC…HLVEYFCQVL (75 aa)). O-(pantetheine 4'-phosphoryl)serine is present on serine 1741.

It catalyses the reaction 3 malonyl-CoA + acetyl-CoA + NADPH + 3 H(+) = 6-methylsalicylate + 3 CO2 + NADP(+) + 4 CoA + H2O. It functions in the pathway secondary metabolite biosynthesis; terpenoid biosynthesis. In terms of biological role, non-reducing polyketide synthase; part of the gene cluster that mediates the biosynthesis of macrophorins, isoprenoid epoxycyclohexenones containing cyclized drimane moieties. The first step of the pathway is the synthesis of 6-methylsalicylic acid (6-MSA) by the polyketide synthase macA. 6-MSA is then converted to m-cresol by the decarboxylase macB. The cytochrome P450 monooxygenase macC then catalyzes the oxidation of m-cresol to toluquinol. Epoxidation of toluquinol is then performed by the short chain dehydrogenase macD, with the help of macE, and a further prenylation by macG leads to 7-deacetoxyyanuthone A. The next step is the hydroxylation of C-22 of 7-deacetoxyyanuthone A by the cytochrome P450 monooxygenase macH to yield 22-deacetylyanuthone A. O-Mevalon transferase macI then attaches mevalon to the hydroxyl group of 22-deacetylyanuthone A to produce yanuthone E. The terpene cyclase macJ catalyzes the cyclization of 22-deacetylyanuthone A to macrophorin A. MacJ is also able to catalyze cyclization of yanuthone E and 7-deacetoxyyanuthone A to their corresponding macrophorins. The macJ products can be further modified by macH and macJ, as well as by the FAD-dependent monooxygenase macF, to produce additional macrophorins, including 4'-oxomacrophorin A, 4'-oxomacrophorin D and 4'-oxomacrophorin E. The sequence is that of 6-methylsalicylic acid synthase from Penicillium terrestre.